The following is an 84-amino-acid chain: Toluene-4-monooxygenase system, hydroxylase component subunit gamma (84 aa).

The protein belongs to the TmoB/XamoB family. The alkene monooxygenase multicomponent enzyme system is composed of an electron transfer component and a monooxygenase component interacting with the effector protein TmoD. The electron transfer component is composed of a ferredoxin reductase (TmoF) and a ferredoxin (TmoC), and the monooxygenase component is formed by a heterohexamer (dimer of heterotrimers) of two alpha subunits (TmoA), two beta subunits (TmoE) and two gamma subunits (TmoB).

The catalysed reaction is toluene + NADH + O2 + H(+) = 4-methylphenol + NAD(+) + H2O. The protein operates within xenobiotic degradation; toluene degradation. With respect to regulation, inhibited by Zn(2+) and Cu(2+). Functionally, component of the toluene-4-monooxygenase multicomponent enzyme system which catalyzes the O2- and NADH-dependent hydroxylation of toluene to form p-cresol. Also able to convert benzene to phenol, catechol, and 1,2,3-trihydroxybenzene by successive hydroxylations. The chain is Toluene-4-monooxygenase system, hydroxylase component subunit gamma from Ectopseudomonas mendocina (Pseudomonas mendocina).